The following is a 116-amino-acid chain: Large ribosomal subunit protein uL18 (116 aa).

This sequence belongs to the universal ribosomal protein uL18 family. In terms of assembly, part of the 50S ribosomal subunit; part of the 5S rRNA/L5/L18/L25 subcomplex. Contacts the 5S and 23S rRNAs.

Its function is as follows. This is one of the proteins that bind and probably mediate the attachment of the 5S RNA into the large ribosomal subunit, where it forms part of the central protuberance. The sequence is that of Large ribosomal subunit protein uL18 from Alcanivorax borkumensis (strain ATCC 700651 / DSM 11573 / NCIMB 13689 / SK2).